The following is a 192-amino-acid chain: dCTP deaminase, dUMP-forming (192 aa).

DCTP-binding positions include 101-106, aspartate 119, 127-129, glutamine 148, tyrosine 162, and glutamine 174; these read KSSLGR and TLE. Catalysis depends on glutamate 129, which acts as the Proton donor/acceptor. Residues 162–192 are disordered; sequence YGSGADGSRYQGQRGPTASRSHVKFHRTHVE. Residues 171-181 show a composition bias toward polar residues; sequence YQGQRGPTASR. Over residues 182–192 the composition is skewed to basic residues; the sequence is SHVKFHRTHVE.

It belongs to the dCTP deaminase family. In terms of assembly, homotrimer.

It carries out the reaction dCTP + 2 H2O = dUMP + NH4(+) + diphosphate. It functions in the pathway pyrimidine metabolism; dUMP biosynthesis; dUMP from dCTP: step 1/1. In terms of biological role, bifunctional enzyme that catalyzes both the deamination of dCTP to dUTP and the hydrolysis of dUTP to dUMP without releasing the toxic dUTP intermediate. This is dCTP deaminase, dUMP-forming from Beutenbergia cavernae (strain ATCC BAA-8 / DSM 12333 / CCUG 43141 / JCM 11478 / NBRC 16432 / NCIMB 13614 / HKI 0122).